A 149-amino-acid polypeptide reads, in one-letter code: Large ribosomal subunit protein bL9 (149 aa).

Belongs to the bacterial ribosomal protein bL9 family.

Binds to the 23S rRNA. The protein is Large ribosomal subunit protein bL9 of Aquifex aeolicus (strain VF5).